We begin with the raw amino-acid sequence, 493 residues long: MTKRDYQNDTTAESRPTKKSKGEKKVKETKEKKEKKVKSYVQNPSLDTLPQAEIDEFLASNSIKITDTLPDATPLRPIISFSHLPECNSNLYEQLNSFKSPTSIQSATWPLLFGGRDVIGIAETGSGKTLAFGLPCLKKIEDSKKKKSKPYQPMAVIISPTRELAMQIHDQLQKFAGPVGAKVACIFGGVRKDEQREVLKTANIVVATPGRLKDLQNDGSVDLGKVRYLVLDEADRMLDKGFEQDIKDIIQPMPVSKRQTVMFTATWPPVVRELASTFMSSPVTVTIGGDPSADPRANTRIKQVVEVVKPHEKEGRLVQLLKQHQRGAEKVLAFCLYKKEATRIERFLQSRGFKVAGIHGDLSQQERFRSLDAFKTGAATVLVATDVAARGLDIPAVKLVINVTFPLTVEDYVHRIGRTGRAGAEGHAITLFTETDKAQSGALINVLKAAGQEVPEELLKFGGTVKKKQHDAYGAFFKDVDTTKAATKIVFDD.

The interval 1–38 (MTKRDYQNDTTAESRPTKKSKGEKKVKETKEKKEKKVK) is disordered. Residues 23–34 (EKKVKETKEKKE) are compositionally biased toward basic and acidic residues. A Q motif motif is present at residues 97–105 (SFKSPTSIQ). Residues 109-285 (WPLLFGGRDV…STFMSSPVTV (177 aa)) form the Helicase ATP-binding domain. Residue 122-129 (AETGSGKT) coordinates ATP. The DEAD box motif lies at 232 to 235 (DEAD). The region spanning 316-462 (RLVQLLKQHQ…EVPEELLKFG (147 aa)) is the Helicase C-terminal domain.

Belongs to the DEAD box helicase family. DDX5/DBP2 subfamily.

It localises to the nucleus. Its subcellular location is the nucleolus. It catalyses the reaction ATP + H2O = ADP + phosphate + H(+). In terms of biological role, ATP-dependent RNA helicase required for 60S ribosomal subunit synthesis. Involved in efficient pre-rRNA processing, predominantly at site A3, which is necessary for the normal formation of 25S and 5.8S rRNAs. The protein is ATP-dependent RNA helicase dbp3 (dbp3) of Aspergillus terreus (strain NIH 2624 / FGSC A1156).